The following is a 409-amino-acid chain: Glycogenin (409 aa).

Positions 8, 14, and 80 each coordinate UDP. UDP-alpha-D-glucose contacts are provided by Leu-8, Tyr-14, Arg-80, Lys-89, Asp-105, Asp-107, Asn-140, Ser-141, Asp-169, Asp-172, and Gln-173. The UDP site is built by Asp-105 and Asp-107. Mn(2+)-binding residues include Asp-105 and Asp-107. Tyr-212 carries an O-linked (Glc...) tyrosine glycan. UDP is bound by residues His-229, Gly-232, and Lys-235. His-229 contacts Mn(2+). UDP-alpha-D-glucose is bound by residues Gly-232 and Lys-235. Positions Arg-283–Glu-303 are disordered.

This sequence belongs to the glycosyltransferase 8 family. Glycogenin subfamily. It depends on Mn(2+) as a cofactor.

The protein resides in the cytoplasm. Its subcellular location is the vacuole. It carries out the reaction L-tyrosyl-[glycogenin] + UDP-alpha-D-glucose = alpha-D-glucosyl-L-tyrosyl-[glycogenin] + UDP + H(+). The catalysed reaction is [1,4-alpha-D-glucosyl](n)-L-tyrosyl-[glycogenin] + UDP-alpha-D-glucose = [1,4-alpha-D-glucosyl](n+1)-L-tyrosyl-[glycogenin] + UDP + H(+). Glycogenin participates in the glycogen biosynthetic process along with glycogen synthase and glycogen branching enzyme. It catalyzes the formation of a short alpha (1,4)-glucosyl chain covalently attached via a glucose 1-O-tyrosyl linkage to internal tyrosine residues and these chains act as primers for the elongation reaction catalyzed by glycogen synthase. The sequence is that of Glycogenin from Komagataella phaffii (strain GS115 / ATCC 20864) (Yeast).